Here is a 238-residue protein sequence, read N- to C-terminus: Ribitol-5-phosphate cytidylyltransferase 1 (238 aa).

CTP is bound by residues 7 to 10 (LAGG) and 81 to 87 (GSDRNDT).

Belongs to the IspD/TarI cytidylyltransferase family. TarI subfamily.

The catalysed reaction is D-ribitol 5-phosphate + CTP + H(+) = CDP-L-ribitol + diphosphate. It participates in cell wall biogenesis; poly(ribitol phosphate) teichoic acid biosynthesis. In terms of biological role, catalyzes the transfer of the cytidylyl group of CTP to D-ribitol 5-phosphate. This is Ribitol-5-phosphate cytidylyltransferase 1 from Staphylococcus aureus (strain USA300).